The chain runs to 325 residues: Beta-ketoacyl-[acyl-carrier-protein] synthase III (325 aa).

Active-site residues include Cys113 and His250. Positions 251–255 (QANIR) are ACP-binding. Residue Asn280 is part of the active site.

Belongs to the thiolase-like superfamily. FabH family. As to quaternary structure, homodimer.

It is found in the cytoplasm. The catalysed reaction is malonyl-[ACP] + acetyl-CoA + H(+) = 3-oxobutanoyl-[ACP] + CO2 + CoA. Its pathway is lipid metabolism; fatty acid biosynthesis. In terms of biological role, catalyzes the condensation reaction of fatty acid synthesis by the addition to an acyl acceptor of two carbons from malonyl-ACP. Catalyzes the first condensation reaction which initiates fatty acid synthesis and may therefore play a role in governing the total rate of fatty acid production. Possesses both acetoacetyl-ACP synthase and acetyl transacylase activities. Its substrate specificity determines the biosynthesis of branched-chain and/or straight-chain of fatty acids. The chain is Beta-ketoacyl-[acyl-carrier-protein] synthase III from Streptococcus suis (strain 98HAH33).